A 239-amino-acid chain; its full sequence is Type II restriction enzyme Eco47II (239 aa).

It catalyses the reaction Endonucleolytic cleavage of DNA to give specific double-stranded fragments with terminal 5'-phosphates.. A P subtype restriction enzyme that recognizes the double-stranded sequence 5'-GGNCC-3'; the cleavage site is unknown. This chain is Type II restriction enzyme Eco47II, found in Escherichia coli.